An 829-amino-acid chain; its full sequence is Periplasmic nitrate reductase (829 aa).

Positions 1–31 (MKLSRRDFMKANAVAAAAAAAGLTIPTVARA) form a signal peptide, tat-type signal. A 4Fe-4S Mo/W bis-MGD-type domain is found at 40–96 (ITWDKAPCRFCGTGCGVLVGTQNGRIVASQGDPDAPVNRGLNCIKGYFLPKIMYGKD). [4Fe-4S] cluster-binding residues include C47, C50, C54, and C82. Residues K84, Q151, N176, C180, 213–220 (WGSNMAEM), 263–265 (QSD), M373, Q377, N483, 509–510 (SD), K532, D559, and 719–728 (TGRVLEHWHT) each bind Mo-bis(molybdopterin guanine dinucleotide). Residue F795 coordinates substrate. N803 and K820 together coordinate Mo-bis(molybdopterin guanine dinucleotide).

Belongs to the prokaryotic molybdopterin-containing oxidoreductase family. NasA/NapA/NarB subfamily. As to quaternary structure, component of the periplasmic nitrate reductase NapAB complex composed of NapA and NapB. [4Fe-4S] cluster is required as a cofactor. The cofactor is Mo-bis(molybdopterin guanine dinucleotide). Post-translationally, predicted to be exported by the Tat system. The position of the signal peptide cleavage has not been experimentally proven.

Its subcellular location is the periplasm. It catalyses the reaction 2 Fe(II)-[cytochrome] + nitrate + 2 H(+) = 2 Fe(III)-[cytochrome] + nitrite + H2O. Catalytic subunit of the periplasmic nitrate reductase complex NapAB. Receives electrons from NapB and catalyzes the reduction of nitrate to nitrite. The protein is Periplasmic nitrate reductase of Edwardsiella ictaluri (strain 93-146).